A 529-amino-acid chain; its full sequence is Probable cytochrome P450 6t1 (529 aa).

Cys472 contacts heme.

It belongs to the cytochrome P450 family. The cofactor is heme.

The protein localises to the endoplasmic reticulum membrane. It is found in the microsome membrane. Functionally, may be involved in the metabolism of insect hormones and in the breakdown of synthetic insecticides. The protein is Probable cytochrome P450 6t1 (Cyp6t1) of Drosophila melanogaster (Fruit fly).